Reading from the N-terminus, the 259-residue chain is Triosephosphate isomerase (259 aa).

10-12 provides a ligand contact to substrate; the sequence is NWK. The active-site Electrophile is the H102. E172 (proton acceptor) is an active-site residue. Residues G178, S218, and 239–240 contribute to the substrate site; that span reads GG.

It belongs to the triosephosphate isomerase family. Homodimer.

The protein localises to the cytoplasm. The catalysed reaction is D-glyceraldehyde 3-phosphate = dihydroxyacetone phosphate. It functions in the pathway carbohydrate biosynthesis; gluconeogenesis. The protein operates within carbohydrate degradation; glycolysis; D-glyceraldehyde 3-phosphate from glycerone phosphate: step 1/1. Involved in the gluconeogenesis. Catalyzes stereospecifically the conversion of dihydroxyacetone phosphate (DHAP) to D-glyceraldehyde-3-phosphate (G3P). This is Triosephosphate isomerase from Leifsonia xyli subsp. xyli (strain CTCB07).